A 581-amino-acid chain; its full sequence is MAASGRGLCKAVAASPFPAWRRDNTEARGGLKPEYDAVVIGAGHNGLVAAAYLQRLGVNTAVFERRHVIGGAAVTEEIIPGFKFSRASYLLSLLRPQIYTDLELKKHGLRLHLRNPYSFTPMLEEGAGSKVPRCLLLGTDMAENQKQIAQFSQKDAQVFPKYEEFMHRLALAIDPLLDAAPVDMAAFQHGSLLQRMRSLSTLKPLLKAGRILGAQLPRYYEVLTAPITKVLDQWFESEPLKATLATDAVIGAMTSPHTPGSGYVLLHHVMGGLEGMQGAWGYVQGGMGALSDAIASSATTHGASIFTEKTVAKVQVNSEGCVQGVVLEDGTEVRSKMVLSNTSPQITFLKLTPQEWLPEEFLERISQLDTRSPVTKINVAVDRLPSFLAAPNAPRGQPLPHHQCSIHLNCEDTLLLHQAFEDAMDGLPSHRPVIELCIPSSLDPTLAPPGCHVVSLFTQYMPYTLAGGKAWDEQERDAYADRVFDCIEVYAPGFKDSVVGRDILTPPDLERIFGLPGGNIFHCAMSLDQLYFARPVPLHSGYRCPLQGLYLCGSGAHPGGGVMGAAGRNAAHVAFRDLKSM.

FAD is bound at residue 38-71 (VVIGAGHNGLVAAAYLQRLGVNTAVFERRHVIGG).

It belongs to the carotenoid/retinoid oxidoreductase family. As to quaternary structure, interacts with COX5B; this interaction may contribute to localize PYROXD2 to the inner face of the inner mitochondrial membrane.

The protein localises to the mitochondrion matrix. Probable oxidoreductase that may play a role as regulator of mitochondrial function. This is Pyridine nucleotide-disulfide oxidoreductase domain-containing protein 2 from Homo sapiens (Human).